Consider the following 52-residue polypeptide: Alpha-1-antiproteinase 3 (52 aa).

The tract at residues glutamate 1–histidine 20 is disordered.

Belongs to the serpin family. Post-translationally, N-glycosylated; contains glycans with bi- and triantennary side chains. In terms of tissue distribution, plasma.

It localises to the secreted. This Equus caballus (Horse) protein is Alpha-1-antiproteinase 3.